Reading from the N-terminus, the 223-residue chain is Large ribosomal subunit protein uL3 (223 aa).

The tract at residues 137 to 157 (GRASHGNSRSHNVPGSIGMAQ) is disordered. Q157 bears the N5-methylglutamine mark.

Belongs to the universal ribosomal protein uL3 family. Part of the 50S ribosomal subunit. Forms a cluster with proteins L14 and L19. Post-translationally, methylated by PrmB.

In terms of biological role, one of the primary rRNA binding proteins, it binds directly near the 3'-end of the 23S rRNA, where it nucleates assembly of the 50S subunit. The chain is Large ribosomal subunit protein uL3 from Burkholderia pseudomallei (strain 1106a).